The sequence spans 204 residues: Dephospho-CoA kinase (204 aa).

In terms of domain architecture, DPCK spans arginine 12 to cysteine 204. Alanine 20 to serine 25 contacts ATP.

The protein belongs to the CoaE family.

It localises to the cytoplasm. The enzyme catalyses 3'-dephospho-CoA + ATP = ADP + CoA + H(+). Its pathway is cofactor biosynthesis; coenzyme A biosynthesis; CoA from (R)-pantothenate: step 5/5. In terms of biological role, catalyzes the phosphorylation of the 3'-hydroxyl group of dephosphocoenzyme A to form coenzyme A. This Prochlorococcus marinus (strain MIT 9313) protein is Dephospho-CoA kinase.